We begin with the raw amino-acid sequence, 278 residues long: Large ribosomal subunit protein uL2 (278 aa).

Disordered stretches follow at residues 32-57 (ALTE…IGGG) and 221-278 (RGVA…KKKR). Residues 269–278 (IRSRHAKKKR) are compositionally biased toward basic residues.

This sequence belongs to the universal ribosomal protein uL2 family. As to quaternary structure, part of the 50S ribosomal subunit. Forms a bridge to the 30S subunit in the 70S ribosome.

Its function is as follows. One of the primary rRNA binding proteins. Required for association of the 30S and 50S subunits to form the 70S ribosome, for tRNA binding and peptide bond formation. It has been suggested to have peptidyltransferase activity; this is somewhat controversial. Makes several contacts with the 16S rRNA in the 70S ribosome. This is Large ribosomal subunit protein uL2 from Zymomonas mobilis subsp. mobilis (strain ATCC 31821 / ZM4 / CP4).